Here is a 175-residue protein sequence, read N- to C-terminus: Calcineurin subunit B (175 aa).

EF-hand domains lie at 21 to 56, 60 to 88, 90 to 125, and 131 to 166; these read PELMRLKKRFMKLDKDGSGSIDKDEFLQIPQIANNP, RMIAIFDEDGSGTVDFQEFVGGLSAFSSK, GRDEKLRFAFKVYDMDRDGYISNGELYLVLKQMVGN, and QLQQIVDKTIMEADKDGDGKLSFEEFTQMVASTDIV. Positions 34, 36, 38, 40, 45, 66, 68, 70, 72, 77, 103, 105, 107, 109, 114, 144, 146, 148, 150, and 155 each coordinate Ca(2+).

The protein belongs to the calcineurin regulatory subunit family. As to quaternary structure, composed of a catalytic subunit (A) and a regulatory subunit (B).

Its function is as follows. Regulatory subunit of calcineurin, a calcium-dependent, calmodulin stimulated protein phosphatase. Confers calcium sensitivity. Plays a central role in virulence and antifungal drug action. The protein is Calcineurin subunit B (CNB1) of Cryptococcus neoformans var. neoformans serotype D (strain B-3501A) (Filobasidiella neoformans).